The following is a 349-amino-acid chain: Glycerol-3-phosphate dehydrogenase [NAD(P)+] (349 aa).

NADPH-binding residues include Ser31, Phe32, Arg52, Lys53, and Lys126. Sn-glycerol 3-phosphate is bound by residues Lys126, Gly154, and Ser156. Ala158 contacts NADPH. Sn-glycerol 3-phosphate is bound by residues Lys209, Asp262, Ser272, Arg273, and Asn274. Lys209 serves as the catalytic Proton acceptor. An NADPH-binding site is contributed by Arg273. The NADPH site is built by Val297 and Glu299.

This sequence belongs to the NAD-dependent glycerol-3-phosphate dehydrogenase family.

It is found in the cytoplasm. The enzyme catalyses sn-glycerol 3-phosphate + NAD(+) = dihydroxyacetone phosphate + NADH + H(+). The catalysed reaction is sn-glycerol 3-phosphate + NADP(+) = dihydroxyacetone phosphate + NADPH + H(+). It participates in membrane lipid metabolism; glycerophospholipid metabolism. In terms of biological role, catalyzes the reduction of the glycolytic intermediate dihydroxyacetone phosphate (DHAP) to sn-glycerol 3-phosphate (G3P), the key precursor for phospholipid synthesis. The sequence is that of Glycerol-3-phosphate dehydrogenase [NAD(P)+] from Clostridium tetani (strain Massachusetts / E88).